The chain runs to 69 residues: Conotoxin Eb6.20 (69 aa).

The first 17 residues, 1-17 (VLIIAVLFLTACQLTTA), serve as a signal peptide directing secretion. The propeptide occupies 18–41 (ETYSRGRQKHRARRSTDKNSKWTR). 3 disulfide bridges follow: Cys-43–Cys-57, Cys-50–Cys-61, and Cys-56–Cys-68.

Belongs to the conotoxin O1 superfamily. As to expression, expressed by the venom duct.

The protein localises to the secreted. In Conus ebraeus (Hebrew cone), this protein is Conotoxin Eb6.20 (E1).